Reading from the N-terminus, the 472-residue chain is Adenosylhomocysteinase (472 aa).

Residues Thr-61, Asp-136, and Glu-196 each coordinate substrate. 197-199 (TTT) serves as a coordination point for NAD(+). The substrate site is built by Lys-226 and Asp-230. NAD(+)-binding positions include Asn-231, 260–265 (GYGDVG), Glu-283, Asn-318, 339–341 (IGH), and Asn-384.

Belongs to the adenosylhomocysteinase family. NAD(+) is required as a cofactor.

It is found in the cytoplasm. The catalysed reaction is S-adenosyl-L-homocysteine + H2O = L-homocysteine + adenosine. The protein operates within amino-acid biosynthesis; L-homocysteine biosynthesis; L-homocysteine from S-adenosyl-L-homocysteine: step 1/1. In terms of biological role, may play a key role in the regulation of the intracellular concentration of adenosylhomocysteine. The sequence is that of Adenosylhomocysteinase from Cupriavidus necator (strain ATCC 17699 / DSM 428 / KCTC 22496 / NCIMB 10442 / H16 / Stanier 337) (Ralstonia eutropha).